A 370-amino-acid chain; its full sequence is MEGSWRDVLAVLVILAQLTASGSSYQIIEGPQNVTVLKDSEAHFNCTVTHGWKLLMWTLNQMVVLSLTTQGPIITNNRFTYASYNSTDSFISELIIHDVQPSDSGSVQCSLQNSHGFGSAFLSVQVMGTLNIPSNNLIVTEGEPCNVTCYAVGWTSLPDISWELEVPVSHSSYNSFLESGNFMRVLSVLDLTPLGNGTLTCVAELKDLQASKSLTVNLTVVQPPPDSIGEEGPALPTWAIILLAVAFSLLLILIIVLIIIFCCCCASRREKEESTYQNEIRKSANMRTNKADPETKLKGGKENYGYSSDEAKAAQTASLPPKSAEVSLPEKRSSSLPYQELNKHQPGPATHPRVSFDIASPQKVRNVTLV.

Residues 1 to 24 form the signal peptide; sequence MEGSWRDVLAVLVILAQLTASGSS. Ig-like V-type domains lie at 25–125 and 128–215; these read YQII…LSVQ and GTLN…KSLT. Over 25-239 the chain is Extracellular; that stretch reads YQIIEGPQNV…EEGPALPTWA (215 aa). Asn33 and Asn45 each carry an N-linked (GlcNAc...) asparagine glycan. An intrachain disulfide couples Cys46 to Cys109. N-linked (GlcNAc...) asparagine glycans are attached at residues Asn146, Asn196, and Asn217. A disulfide bridge links Cys149 with Cys201. The helical transmembrane segment at 240-260 threads the bilayer; the sequence is IILLAVAFSLLLILIIVLIII. At 261–370 the chain is on the cytoplasmic side; that stretch reads FCCCCASRRE…PQKVRNVTLV (110 aa). The segment at 284-359 is disordered; that stretch reads ANMRTNKADP…THPRVSFDIA (76 aa). Residues 289–301 show a composition bias toward basic and acidic residues; the sequence is NKADPETKLKGGK.

Belongs to the immunoglobulin superfamily. As to quaternary structure, interacts with MAGI1 at tight junctions, forms a tripartite complex with NPHS1. Interacts with LNX1 isoform 2 via its PDZ 2 domain, it may also interact with other isoforms containing this domain. Post-translationally, N-glycosylated. Localized to kidney glomeruli and small intestinal epithelial cells. In kidney glomeruli, it is localized at slit diaphragm. Also found in spermatogonia, gonocytes, hematopoietic stem cells and Sertoli cells.

It localises to the apical cell membrane. It is found in the cell junction. The protein resides in the tight junction. Provides, together with MAGI1, an adhesion machinery at tight junctions, which may regulate the permeability of kidney glomerulus and small intestinal epithelial cells. Mediates calcium-independent homophilic cell adhesion. In testis, it may function as a cell adhesion molecule rather than a tight-junction protein. It may participate in the adhesion between spermatogonia-spermatogonia, spermatogonia-Sertoli cells, and Sertoli cells-Sertoli cells. This chain is Immunoglobulin superfamily member 5 (Igsf5), found in Mus musculus (Mouse).